A 372-amino-acid chain; its full sequence is MVFPWRCEGTYWGSRNILKLWVWTLLCCDFLIHHGTHCWTYHYSEKPMNWENARKFCKQNYTDLVAIQNKREIEYLENTLPKSPYYYWIGIRKIGKMWTWVGTNKTLTKEAENWGAGEPNNKKSKEDCVEIYIKRERDSGKWNDDACHKRKAALCYTASCQPGSCNGRGECVETINNHTCICDAGYYGPQCQYVVQCEPLEAPELGTMDCIHPLGNFSFQSKCAFNCSEGRELLGTAETQCGASGNWSSPEPICQVVQCEPLEAPELGTMDCIHPLGNFSFQSKCAFNCSEGRELLGTAETQCGASGNWSSPEPICQETNRSFSKIKEGDYNPLFIPVAVMVTAFSGLAFLIWLARRLKKGKKSQERMDDPY.

The signal sequence occupies residues Met-1–Cys-28. The propeptide occupies Asp-29–Cys-38. Topologically, residues Trp-39–Asn-332 are extracellular. A C-type lectin domain is found at Lys-55–Cys-155. 10 disulfides stabilise this stretch: Cys-57–Cys-155, Cys-128–Cys-147, Cys-128–Cys-160, Cys-160–Cys-171, Cys-165–Cys-180, Cys-182–Cys-191, Cys-197–Cys-241, Cys-227–Cys-254, Cys-259–Cys-303, and Cys-289–Cys-316. 2 N-linked (GlcNAc...) asparagine glycosylation sites follow: Asn-60 and Asn-104. Residues Glu-118, Asn-120, Glu-126, Asn-143, and Asp-144 each contribute to the Ca(2+) site. The EGF-like domain occupies Tyr-156–Gln-192. An N-linked (GlcNAc...) asparagine glycan is attached at Asn-177. Sushi domains lie at Val-195–Val-256 and Val-257–Glu-318. Residues Asn-216, Asn-226, Asn-246, Asn-278, Asn-288, Asn-308, and Asn-320 are each glycosylated (N-linked (GlcNAc...) asparagine). A helical membrane pass occupies residues Pro-333 to Ala-355. Residues Arg-356–Tyr-372 lie on the Cytoplasmic side of the membrane.

Belongs to the selectin/LECAM family. Interaction with SELPLG/PSGL1 and PODXL2 is required for promoting recruitment and rolling of leukocytes. This interaction is dependent on the sialyl Lewis X glycan modification of SELPLG and PODXL2, and tyrosine sulfation modifications of SELPLG. Sulfation on 'Tyr-51' of SELPLG is important for L-selectin binding. In terms of processing, N-glycosylated. Predominantly expressed in lymphoid tissue.

Its subcellular location is the cell membrane. Its function is as follows. Calcium-dependent lectin that mediates cell adhesion by binding to glycoproteins on neighboring cells. Mediates the adherence of lymphocytes to endothelial cells of high endothelial venules in peripheral lymph nodes. Promotes initial tethering and rolling of leukocytes in endothelia. This chain is L-selectin (Sell), found in Mus musculus (Mouse).